Consider the following 216-residue polypeptide: Outer-membrane lipoprotein LolB (216 aa).

An N-terminal signal peptide occupies residues 1–24 (MNNLNYFTKISASCAALALMTLAG). C25 carries the N-palmitoyl cysteine lipid modification. C25 is lipidated: S-diacylglycerol cysteine.

This sequence belongs to the LolB family. Monomer.

It is found in the cell outer membrane. Functionally, plays a critical role in the incorporation of lipoproteins in the outer membrane after they are released by the LolA protein. This Shewanella loihica (strain ATCC BAA-1088 / PV-4) protein is Outer-membrane lipoprotein LolB.